The chain runs to 260 residues: Hemin import ATP-binding protein HmuV (260 aa).

The ABC transporter domain occupies 6-242 (LSGRNISMKY…ERIEQVYGYR (237 aa)). 38–45 (GPNGAGKS) is a binding site for ATP.

Belongs to the ABC transporter superfamily. Heme (hemin) importer (TC 3.A.1.14.5) family. As to quaternary structure, the complex is composed of two ATP-binding proteins (HmuV), two transmembrane proteins (HmuU) and a solute-binding protein (HmuT).

It is found in the cell inner membrane. Functionally, part of the ABC transporter complex HmuTUV involved in hemin import. Responsible for energy coupling to the transport system. This Vibrio parahaemolyticus serotype O3:K6 (strain RIMD 2210633) protein is Hemin import ATP-binding protein HmuV.